Consider the following 295-residue polypeptide: UDP-N-acetylenolpyruvoylglucosamine reductase (295 aa).

The region spanning lysine 24–glycine 188 is the FAD-binding PCMH-type domain. Residue arginine 168 is part of the active site. The Proton donor role is filled by serine 217. Glutamate 287 is a catalytic residue.

This sequence belongs to the MurB family. FAD serves as cofactor.

It is found in the cytoplasm. It carries out the reaction UDP-N-acetyl-alpha-D-muramate + NADP(+) = UDP-N-acetyl-3-O-(1-carboxyvinyl)-alpha-D-glucosamine + NADPH + H(+). It participates in cell wall biogenesis; peptidoglycan biosynthesis. Cell wall formation. This Rickettsia massiliae (strain Mtu5) protein is UDP-N-acetylenolpyruvoylglucosamine reductase.